Consider the following 78-residue polypeptide: Large ribosomal subunit protein bL28 (78 aa).

The protein belongs to the bacterial ribosomal protein bL28 family.

The chain is Large ribosomal subunit protein bL28 from Rippkaea orientalis (strain PCC 8801 / RF-1) (Cyanothece sp. (strain PCC 8801)).